Reading from the N-terminus, the 430-residue chain is Adenylosuccinate synthetase (430 aa).

Residues 12–18 and 40–42 contribute to the GTP site; these read GDEGKGK and GHT. Asp-13 serves as the catalytic Proton acceptor. 2 residues coordinate Mg(2+): Asp-13 and Gly-40. Residues 13–16, 38–41, Thr-128, Arg-142, Gln-223, Thr-238, and Arg-302 each bind IMP; these read DEGK and NAGH. His-41 acts as the Proton donor in catalysis. 298–304 is a binding site for substrate; sequence TTTGRPR. GTP contacts are provided by residues Arg-304, 330–332, and 412–414; these read LLD and SVG.

The protein belongs to the adenylosuccinate synthetase family. As to quaternary structure, homodimer. Requires Mg(2+) as cofactor.

Its subcellular location is the cytoplasm. It carries out the reaction IMP + L-aspartate + GTP = N(6)-(1,2-dicarboxyethyl)-AMP + GDP + phosphate + 2 H(+). It participates in purine metabolism; AMP biosynthesis via de novo pathway; AMP from IMP: step 1/2. Functionally, plays an important role in the de novo pathway of purine nucleotide biosynthesis. Catalyzes the first committed step in the biosynthesis of AMP from IMP. The polypeptide is Adenylosuccinate synthetase (Listeria innocua serovar 6a (strain ATCC BAA-680 / CLIP 11262)).